The following is a 953-amino-acid chain: ATP-dependent 6-phosphofructokinase (953 aa).

The tract at residues 1–558 (MIEGISFASF…QLQGFLLTNS (558 aa)) is N-terminal catalytic PFK domain 1. Residues G193, 256-257 (RC), and 286-289 (GDGS) contribute to the ATP site. Mg(2+) is bound at residue D287. Substrate contacts are provided by residues 332 to 334 (SID), R369, 376 to 378 (MGR), E433, R460, and 466 to 469 (HVQR). D334 (proton acceptor) is an active-site residue. An interdomain linker region spans residues 559–572 (ADKDRPQEPAKDPL). The interval 573 to 953 (RVAIVCTGAP…AKEQGIIDPC (381 aa)) is C-terminal regulatory PFK domain 2. Residues R645, 702-706 (TISNN), R740, 747-749 (QGG), E807, R833, 839-842 (HVQQ), and R906 contribute to the beta-D-fructose 2,6-bisphosphate site.

It belongs to the phosphofructokinase type A (PFKA) family. ATP-dependent PFK group I subfamily. Eukaryotic two domain clade 'E' sub-subfamily. As to quaternary structure, heterooctamer of 4 alpha and 4 beta chains. Mg(2+) serves as cofactor.

It localises to the cytoplasm. The enzyme catalyses beta-D-fructose 6-phosphate + ATP = beta-D-fructose 1,6-bisphosphate + ADP + H(+). It functions in the pathway carbohydrate degradation; glycolysis; D-glyceraldehyde 3-phosphate and glycerone phosphate from D-glucose: step 3/4. Its activity is regulated as follows. Allosterically activated by ADP, AMP, or fructose 2,6-bisphosphate, and allosterically inhibited by ATP or citrate. Functionally, catalyzes the phosphorylation of D-fructose 6-phosphate to fructose 1,6-bisphosphate by ATP, the first committing step of glycolysis. The protein is ATP-dependent 6-phosphofructokinase (PFK1) of Yarrowia lipolytica (strain CLIB 122 / E 150) (Yeast).